Consider the following 445-residue polypeptide: POU domain, class 3, transcription factor 2 (445 aa).

Disordered stretches follow at residues 63–173 (TALS…WRSA), 203–269 (LGAG…TPTS), 336–361 (EADSSSGSPTSIDKIASQGRKRKKRT), and 411–445 (EKRMTPPGGTLPGAEDVYGGSRDTPPHHGVQTPVQ). A compositionally biased stretch (gly residues) spans 68 to 90 (GGSGGGGGGGGGGGGGGGGGGDG). Low complexity predominate over residues 125 to 151 (QQQHQQQQQQQQQQQQQQQQQQQQQQQ). Basic and acidic residues predominate over residues 217–226 (LRDAHDEPHH). Residues 227–237 (ADHHPHPHSHP) are compositionally biased toward basic residues. Positions 239–253 (QQPPPPPPPQGPPGH) are enriched in pro residues. In terms of domain architecture, POU-specific spans 264 to 338 (EDTPTSDDLE…LLNKWLEEAD (75 aa)). The residue at position 343 (S343) is a Phosphoserine. Positions 356 to 415 (KRKKRTSIEVSVKGALESHFLKCPKPSAQEITSLADSLQLEKEVVRVWFCNRRQKEKRMT) form a DNA-binding region, homeobox.

Belongs to the POU transcription factor family. Class-3 subfamily. Interacts with PQBP1. Interaction with ISL1. Expressed specifically at high levels in the brain.

The protein resides in the nucleus. Its function is as follows. Transcription factor that plays a key role in neuronal differentiation. Binds preferentially to the recognition sequence which consists of two distinct half-sites, ('GCAT') and ('TAAT'), separated by a non-conserved spacer region of 0, 2, or 3 nucleotides. Acts as a transcriptional activator when binding cooperatively with SOX4, SOX11, or SOX12 to gene promoters. The combination of three transcription factors, ASCL1, POU3F2/BRN2 and MYT1L, is sufficient to reprogram fibroblasts and other somatic cells into induced neuronal (iN) cells in vitro. Acts downstream of ASCL1, accessing chromatin that has been opened by ASCL1, and promotes transcription of neuronal genes. The polypeptide is POU domain, class 3, transcription factor 2 (Pou3f2) (Rattus norvegicus (Rat)).